The following is a 427-amino-acid chain: 3-phosphoshikimate 1-carboxyvinyltransferase (427 aa).

3-phosphoshikimate is bound by residues lysine 20, serine 21, and arginine 25. Lysine 20 provides a ligand contact to phosphoenolpyruvate. Residues glycine 92 and arginine 120 each contribute to the phosphoenolpyruvate site. Serine 166, glutamine 168, aspartate 312, and lysine 339 together coordinate 3-phosphoshikimate. Glutamine 168 is a binding site for phosphoenolpyruvate. Aspartate 312 serves as the catalytic Proton acceptor. The phosphoenolpyruvate site is built by arginine 343 and arginine 385.

The protein belongs to the EPSP synthase family. In terms of assembly, monomer.

The protein resides in the cytoplasm. The enzyme catalyses 3-phosphoshikimate + phosphoenolpyruvate = 5-O-(1-carboxyvinyl)-3-phosphoshikimate + phosphate. Its pathway is metabolic intermediate biosynthesis; chorismate biosynthesis; chorismate from D-erythrose 4-phosphate and phosphoenolpyruvate: step 6/7. Catalyzes the transfer of the enolpyruvyl moiety of phosphoenolpyruvate (PEP) to the 5-hydroxyl of shikimate-3-phosphate (S3P) to produce enolpyruvyl shikimate-3-phosphate and inorganic phosphate. The chain is 3-phosphoshikimate 1-carboxyvinyltransferase from Streptococcus pyogenes serotype M49 (strain NZ131).